A 491-amino-acid chain; its full sequence is Ketol-acid reductoisomerase (NADP(+)) (491 aa).

The region spanning 14–208 (LDQLGRCRFM…GGHRAGVLES (195 aa)) is the KARI N-terminal Rossmann domain. NADP(+) is bound by residues 45–48 (CGAQ), Arg-68, Arg-76, Ser-78, and 108–110 (DKQ). His-132 is a catalytic residue. Residue Gly-158 participates in NADP(+) binding. KARI C-terminal knotted domains follow at residues 209 to 344 (SFVA…NAPK) and 345 to 485 (YEGK…MTDM). 4 residues coordinate Mg(2+): Asp-217, Glu-221, Glu-389, and Glu-393. A substrate-binding site is contributed by Ser-414.

The protein belongs to the ketol-acid reductoisomerase family. Mg(2+) is required as a cofactor.

The enzyme catalyses (2R)-2,3-dihydroxy-3-methylbutanoate + NADP(+) = (2S)-2-acetolactate + NADPH + H(+). It catalyses the reaction (2R,3R)-2,3-dihydroxy-3-methylpentanoate + NADP(+) = (S)-2-ethyl-2-hydroxy-3-oxobutanoate + NADPH + H(+). The protein operates within amino-acid biosynthesis; L-isoleucine biosynthesis; L-isoleucine from 2-oxobutanoate: step 2/4. It functions in the pathway amino-acid biosynthesis; L-valine biosynthesis; L-valine from pyruvate: step 2/4. In terms of biological role, involved in the biosynthesis of branched-chain amino acids (BCAA). Catalyzes an alkyl-migration followed by a ketol-acid reduction of (S)-2-acetolactate (S2AL) to yield (R)-2,3-dihydroxy-isovalerate. In the isomerase reaction, S2AL is rearranged via a Mg-dependent methyl migration to produce 3-hydroxy-3-methyl-2-ketobutyrate (HMKB). In the reductase reaction, this 2-ketoacid undergoes a metal-dependent reduction by NADPH to yield (R)-2,3-dihydroxy-isovalerate. The polypeptide is Ketol-acid reductoisomerase (NADP(+)) (Pasteurella multocida (strain Pm70)).